Consider the following 76-residue polypeptide: Omega-scoloptoxin(13)-Ssm2b (76 aa).

The signal sequence occupies residues 1–22 (MAYIYALIFAIVVCMNTDVIQA).

This sequence belongs to the scoloptoxin-13 family. Contains 3 disulfide bonds. As to expression, expressed by the venom gland.

It localises to the secreted. In terms of biological role, inhibits voltage-gated calcium channel (Cav) currents. This Scolopendra mutilans (Chinese red-headed centipede) protein is Omega-scoloptoxin(13)-Ssm2b.